Consider the following 1426-residue polypeptide: ABC transporter G family member 31 (1426 aa).

N-linked (GlcNAc...) asparagine glycans are attached at residues N6 and N150. Residues 160–434 form the ABC transporter 1 domain; the sequence is LSSLRIIKPR…FESLGFRLPP (275 aa). 193-200 is a binding site for ATP; it reads GPPGSGKS. The N-linked (GlcNAc...) asparagine glycan is linked to N219. T276 is subject to Phosphothreonine. In terms of domain architecture, ABC transmembrane type-2 1 spans 512 to 725; that stretch reads ENLKVCFVRE…GQRAIAVNEF (214 aa). 6 helical membrane passes run 530 to 550, 569 to 589, 618 to 638, 649 to 669, 675 to 695, and 760 to 780; these read FLYT…ATVF, CLFF…PLMI, VPYS…TVGL, MLLL…MASL, IANT…GFVI, and IGIA…TLAL. The 253-residue stretch at 826–1078 folds into the ABC transporter 2 domain; it reads MTFHNVNYYV…VLVDYFQGIN (253 aa). N856 carries an N-linked (GlcNAc...) asparagine glycan. 871 to 878 is an ATP binding site; it reads GSSGAGKT. An ABC transmembrane type-2 2 domain is found at 1151-1365; that stretch reads SQFLLCLWKQ…TLQGVILSQL (215 aa). The next 7 membrane-spanning stretches (helical) occupy residues 1172 to 1192, 1202 to 1222, 1258 to 1278, 1285 to 1305, 1315 to 1335, 1342 to 1362, and 1396 to 1416; these read LVRL…FWDI, LITV…SNAS, IPYI…TIGF, FVLY…YGMM, LAAV…GFLV, VWWI…GVIL, and IGVS…AFAL.

Belongs to the ABC transporter superfamily. ABCG family. PDR (TC 3.A.1.205) subfamily. As to expression, expressed in seedlings, stems, leaves, siliques and inflorescence. In seeds, confined to the endosperm. Highly expressed in the tapetum of anthers.

The protein resides in the cell membrane. The catalysed reaction is abscisate(in) + ATP + H2O = abscisate(out) + ADP + phosphate + H(+). Its function is as follows. Together with ABCG25, export abscisic acid (ABA) from the endosperm to deliver it to the embryo via ABCG30 and ABCG40-mediated import to suppress radicle extension and subsequent embryonic growth. Together with ABCG9, involved in pollen coat deposition of steryl glycosides required for pollen fitness. May be a general defense protein. This is ABC transporter G family member 31 from Arabidopsis thaliana (Mouse-ear cress).